Here is a 55-residue protein sequence, read N- to C-terminus: Neurotoxin X-29S (55 aa).

Positions 1–23 (MKIFFAVLVILVLFSMLIWTAYG) are cleaved as a signal peptide. 3 disulfide bridges follow: Cys-30/Cys-45, Cys-36/Cys-50, and Cys-39/Cys-53.

Expressed by the venom gland.

The protein localises to the secreted. The chain is Neurotoxin X-29S from Olivierus martensii (Manchurian scorpion).